The following is a 965-amino-acid chain: Fibronectin-binding protein A (965 aa).

The N-terminal stretch at 1–36 is a signal peptide; sequence MKNNLRYGIRKHKLGAASVFLGTMIVIGMGQDKEAA. The YSIRK-G/S signaling motif signature appears at 7–18; that stretch reads YGIRKHKLGAAS. A disordered region spans residues 37-206; it reads ASEQKTTTVE…VTSKVTVEDE (170 aa). The ligand-binding A region stretch occupies residues 37-514; that stretch reads ASEQKTTTVE…SNKANGDGKY (478 aa). Polar residues predominate over residues 39–55; the sequence is EQKTTTVEENGNSATDN. A compositionally biased stretch (low complexity) spans 59–74; that stretch reads ETQTTTTNVNTIDETQ. Positions 75–92 are enriched in polar residues; it reads SYSATATEQPSNATQVTT. The segment covering 112 to 122 has biased composition (basic and acidic residues); it reads TVKEEVVKEEA. A compositionally biased stretch (polar residues) spans 126-139; the sequence is VKETTQSQDNSGDQ. Over residues 179–193 the composition is skewed to basic and acidic residues; the sequence is DVAEAKEASDAKVET. The segment at 194–514 is fibrinogen/elastin/tropoelastin-binding; sequence GTDVTSKVTV…SNKANGDGKY (321 aa). Residues 515 to 837 are fibronectin-binding; that stretch reads GPIVDSNNFE…EGQQTIEEDT (323 aa). One copy of the B-1 repeat lies at 548–577; the sequence is ENQDNTPLDIDYHTAIDGEGGYVDGYIETI. Positions 548-607 are 2 X approximate tandem repeats; it reads ENQDNTPLDIDYHTAIDGEGGYVDGYIETIEETDSSAIDIDYHTAVDSEAGHVGGYTESS. The B-2 repeat unit spans residues 578–607; it reads EETDSSAIDIDYHTAVDSEAGHVGGYTESS. Disordered regions lie at residues 598-625, 743-774, 794-903, and 916-942; these read GHVG…NSKH, LGYE…GNII, IEED…GKVV, and VAPT…NKGM. Residues 748 to 770 form a D-1; truncated repeat; sequence GQNSGNQSFEEDTEEDKPKYEQG. The interval 748–839 is 4 X approximate tandem repeats; sequence GQNSGNQSFE…QQTIEEDTTP (92 aa). Residues 771-785 form a D-2; truncated repeat; it reads GNIIDIDFDSVPQIH. Residues 786–824 form a D-3 repeat; that stretch reads GFNKHNEIIEEDTNKDKPNYQFGGHNSVDFEEDTLPKVS. The span at 794-803 shows a compositional bias: basic and acidic residues; it reads IEEDTNKDKP. The stretch at 825–839 is one D-4; truncated repeat; the sequence is GQNEGQQTIEEDTTP. The segment covering 839 to 885 has biased composition (pro residues); it reads PPTPPTPEVPSEPGTPTPPTPEVPSEPGKPTPPTPEVPAEPGKPVPP. WR repeat units follow at residues 840-853, 854-867, 868-881, and 882-895; these read PTPP…EPGT, PTPP…EPGK, and PVPP…KPSK. The segment at 840–895 is 4 X tandem repeats, Pro-rich (WR); that stretch reads PTPPTPEVPSEPGTPTPPTPEVPSEPGKPTPPTPEVPAEPGKPVPPAKEEPKKPSK. Residues 929–933 carry the LPXTG sorting signal motif; the sequence is LPETG. Thr-932 carries the pentaglycyl murein peptidoglycan amidated threonine modification. The propeptide at 933–965 is removed by sortase; that stretch reads GGEESTNKGMLFGGLFSILGLALLRRNKKNHKA.

The protein localises to the secreted. It is found in the cell wall. Its function is as follows. Promotes bacterial attachment to multiple substrates, such as fibronectin (Fn), fibrinogen (Fg), elastin peptides and tropoelastin. This confers to S.aureus the ability to invade endothelial cells. Promotes adherence to and aggregation of activated platelets. This Staphylococcus aureus (strain MRSA252) protein is Fibronectin-binding protein A (fnbA).